The following is a 223-amino-acid chain: Ion-translocating oxidoreductase complex subunit E (223 aa).

7 consecutive transmembrane segments (helical) span residues 17-37 (SLVQ…TINA), 38-58 (IGLG…ISIL), 68-88 (IPIY…LLHA), 91-111 (FNLY…CIVV), 124-144 (VISF…MFVI), 156-176 (FLFG…FTFI), and 181-201 (TIIL…VIAF).

The protein belongs to the NqrDE/RnfAE family. The complex is composed of six subunits: RnfA, RnfB, RnfC, RnfD, RnfE and RnfG.

The protein resides in the cell inner membrane. In terms of biological role, part of a membrane-bound complex that couples electron transfer with translocation of ions across the membrane. The polypeptide is Ion-translocating oxidoreductase complex subunit E (Buchnera aphidicola subsp. Schizaphis graminum (strain Sg)).